The primary structure comprises 292 residues: Peroxidase 2 (292 aa).

4 cysteine pairs are disulfide-bonded: cysteine 7–cysteine 86, cysteine 40–cysteine 45, cysteine 92–cysteine 288, and cysteine 171–cysteine 199. Histidine 38 (proton acceptor) is an active-site residue. 5 residues coordinate Ca(2+): aspartate 39, valine 42, glycine 44, aspartate 46, and serine 48. An N-linked (GlcNAc...) asparagine glycan is attached at asparagine 68. Residue proline 134 participates in substrate binding. Asparagine 139 carries an N-linked (GlcNAc...) asparagine glycan. Histidine 164 provides a ligand contact to heme b. Threonine 165 contacts Ca(2+). Asparagine 179 is a glycosylation site (N-linked (GlcNAc...) asparagine). Residues aspartate 210, threonine 213, and aspartate 218 each contribute to the Ca(2+) site.

The protein belongs to the peroxidase family. Classical plant (class III) peroxidase subfamily. It depends on Ca(2+) as a cofactor. Heme b serves as cofactor.

The enzyme catalyses 2 a phenolic donor + H2O2 = 2 a phenolic radical donor + 2 H2O. Functionally, removal of H(2)O(2), oxidation of toxic reductants, biosynthesis and degradation of lignin, suberization, auxin catabolism, response to environmental stresses such as wounding, pathogen attack and oxidative stress. These functions might be dependent on each isozyme/isoform in each plant tissue. The sequence is that of Peroxidase 2 from Cucumis sativus (Cucumber).